The sequence spans 457 residues: tRNA-2-methylthio-N(6)-dimethylallyladenosine synthase (457 aa).

Residues 3 to 120 enclose the MTTase N-terminal domain; the sequence is KKVYVKTFGC…LPQMIDARRE (118 aa). Residues C12, C49, C83, C157, C161, and C164 each contribute to the [4Fe-4S] cluster site. Residues 143–377 form the Radical SAM core domain; the sequence is RVEGPSAFVS…QATIEENVAR (235 aa). In terms of domain architecture, TRAM spans 380–447; that stretch reads QSMLGKVERI…PHSLRGELVL (68 aa).

Belongs to the methylthiotransferase family. MiaB subfamily. Monomer. [4Fe-4S] cluster serves as cofactor.

It localises to the cytoplasm. It carries out the reaction N(6)-dimethylallyladenosine(37) in tRNA + (sulfur carrier)-SH + AH2 + 2 S-adenosyl-L-methionine = 2-methylsulfanyl-N(6)-dimethylallyladenosine(37) in tRNA + (sulfur carrier)-H + 5'-deoxyadenosine + L-methionine + A + S-adenosyl-L-homocysteine + 2 H(+). Its function is as follows. Catalyzes the methylthiolation of N6-(dimethylallyl)adenosine (i(6)A), leading to the formation of 2-methylthio-N6-(dimethylallyl)adenosine (ms(2)i(6)A) at position 37 in tRNAs that read codons beginning with uridine. The polypeptide is tRNA-2-methylthio-N(6)-dimethylallyladenosine synthase (Burkholderia mallei (strain NCTC 10247)).